A 181-amino-acid polypeptide reads, in one-letter code: Shikimate kinase 2 (181 aa).

12-17 (GCGKTT) lines the ATP pocket. Mg(2+) is bound by residues threonine 16 and aspartate 32. Residues aspartate 34, arginine 58, and glycine 79 each coordinate substrate. Residues 112–126 (EAEPEVGLRPTLTGK) are LID domain. ATP is bound at residue arginine 120. Position 139 (arginine 139) interacts with substrate.

Belongs to the shikimate kinase family. AroL subfamily. Monomer. Mg(2+) is required as a cofactor.

It is found in the cytoplasm. The catalysed reaction is shikimate + ATP = 3-phosphoshikimate + ADP + H(+). It participates in metabolic intermediate biosynthesis; chorismate biosynthesis; chorismate from D-erythrose 4-phosphate and phosphoenolpyruvate: step 5/7. In terms of biological role, catalyzes the specific phosphorylation of the 3-hydroxyl group of shikimic acid using ATP as a cosubstrate. The sequence is that of Shikimate kinase 2 from Escherichia fergusonii (strain ATCC 35469 / DSM 13698 / CCUG 18766 / IAM 14443 / JCM 21226 / LMG 7866 / NBRC 102419 / NCTC 12128 / CDC 0568-73).